Here is a 465-residue protein sequence, read N- to C-terminus: Cysteine--tRNA ligase (465 aa).

Cysteine 28 is a Zn(2+) binding site. A 'HIGH' region motif is present at residues 30 to 40 (MTVYDYCHLGH). Zn(2+) is bound by residues cysteine 209, histidine 234, and glutamate 238. Residues 266–270 (KMSKS) carry the 'KMSKS' region motif. Lysine 269 provides a ligand contact to ATP.

This sequence belongs to the class-I aminoacyl-tRNA synthetase family. As to quaternary structure, monomer. The cofactor is Zn(2+).

It is found in the cytoplasm. It carries out the reaction tRNA(Cys) + L-cysteine + ATP = L-cysteinyl-tRNA(Cys) + AMP + diphosphate. This is Cysteine--tRNA ligase from Nitrosomonas europaea (strain ATCC 19718 / CIP 103999 / KCTC 2705 / NBRC 14298).